The following is a 306-amino-acid chain: Type 2A encapsulin shell protein SrpI (306 aa).

Belongs to the encapsulin family. Family 2A subfamily. The 24.5 nm encapsulin nanocompartment is formed by 60 subunits; monomers form pentamers which assemble to form shells. There are 12 positively charged pores where the pentamers meet with a minimal pore diameter of 3.7 Angstroms as well 3-fold axis channels and dimer channels.

Its subcellular location is the encapsulin nanocompartment. In terms of biological role, shell component of a type 2A encapsulin nanocompartment. Expression in E.coli generates nanocompartments with an average diameter of 25 nm. They can be disassembled by treatment with 6M guanidine hydrochloride and reassembled with cargo. The nanocompartment is probably involved in sulfur metabolism. Probably allows passage of cysteine into its interior; during growth in light the physiological pH is 8-8.4, about 30-54% of free cysteine (charge -1) would be able to pass through the shell. This chain is Type 2A encapsulin shell protein SrpI, found in Synechococcus elongatus (strain ATCC 33912 / PCC 7942 / FACHB-805) (Anacystis nidulans R2).